A 228-amino-acid polypeptide reads, in one-letter code: Dehydrin Rab25 (228 aa).

2 disordered regions span residues 1–68 and 115–228; these read MAEH…EAPH and AGVT…HGHH. Composition is skewed to basic and acidic residues over residues 169–187 and 212–228; these read KEKI…EQKQ and KGIV…HGHH.

This sequence belongs to the plant dehydrin family.

In Oryza sativa subsp. japonica (Rice), this protein is Dehydrin Rab25 (RAB25).